The following is a 401-amino-acid chain: Large ribosomal subunit protein uL4B (401 aa).

Residues I351–T373 show a composition bias toward basic and acidic residues. Residues I351 to K401 form a disordered region. A compositionally biased stretch (basic residues) spans K374–Q385. The span at A386 to K401 shows a compositional bias: basic and acidic residues.

The protein belongs to the universal ribosomal protein uL4 family. As to quaternary structure, component of the large ribosomal subunit.

The protein localises to the cytoplasm. Its function is as follows. Component of the large ribosomal subunit. The ribosome is a large ribonucleoprotein complex responsible for the synthesis of proteins in the cell. The sequence is that of Large ribosomal subunit protein uL4B (rpl4-b) from Xenopus laevis (African clawed frog).